The chain runs to 673 residues: Probable urea active transporter 2 (673 aa).

14 consecutive transmembrane segments (helical) span residues 8-28, 83-103, 132-152, 164-184, 196-218, 249-269, 287-307, 336-356, 391-411, 424-446, 451-471, 492-512, 559-579, and 592-612; these read GYGY…MAII, IMGG…FLFL, VYLF…LLGG, TVAA…LGGL, VMIY…LIGS, MMYL…GDPG, LMGG…AGLA, IYGM…VMLF, QLVR…GALS, LLTF…LFWN, FSLV…WLAS, FVGN…LSYI, IGIN…ALLG, and LIIV…LFPL.

It belongs to the sodium:solute symporter (SSF) (TC 2.A.21) family.

The protein resides in the endoplasmic reticulum membrane. Functionally, involved in active transport of urea. The protein is Probable urea active transporter 2 (dur3-2) of Schizosaccharomyces pombe (strain 972 / ATCC 24843) (Fission yeast).